The primary structure comprises 162 residues: Sorting nexin-3 (162 aa).

Residue alanine 2 is modified to N-acetylalanine. Residues 27–151 (NFLEIDVSNP…HMFLQDEIID (125 aa)) form the PX domain. Arginine 43 carries the post-translational modification Omega-N-methylarginine. Residues arginine 70, serine 72, lysine 95, and arginine 118 each coordinate a 1,2-diacyl-sn-glycero-3-phospho-(1D-myo-inositol-3-phosphate). At serine 72 the chain carries Phosphoserine. Lysine 95 participates in a covalent cross-link: Glycyl lysine isopeptide (Lys-Gly) (interchain with G-Cter in SUMO2). A binds predominantly to PtdIns(P5) and weaker to PtdIns(P3) abd PtdIns(P4); involved in neurite outgrowth regulation region spans residues 147–162 (DEIIDKSYTPSKIRHA).

The protein belongs to the sorting nexin family. Interacts with VPS26A, VPS29. Interacts with VPS35; the interaction with VPS35 is direct. The association with the retromer CSC subcomplex subunits is proposed to represent a functional distinct retromer variant described as SNX3-retromer complex. Interacts with USP10 and SCNN1A. Interacts with TRFC. Interacts with SNX8; 2 molecules of SNX8 seems to associate with one molecule of SNX3. Interacts with PTPRU. Interacts with MON2 and DOP1B. Post-translationally, ubiquitinated, leading to its proteasomal degradation. Deubiquitinated by USP10. Highly expressed in developing red cells and hematopoietic tissues.

The protein localises to the early endosome. The protein resides in the cytoplasmic vesicle. It is found in the phagosome. Phosphoinositide-binding protein required for multivesicular body formation. Specifically binds phosphatidylinositol 3-phosphate (PtdIns(P3)). Can also bind phosphatidylinositol 4-phosphate (PtdIns(P4)), phosphatidylinositol 5-phosphate (PtdIns(P5)) and phosphatidylinositol 3,5-biphosphate (PtdIns(3,5)P2). Plays a role in protein transport between cellular compartments. Together with RAB7A facilitates endosome membrane association of the retromer cargo-selective subcomplex (CSC). May act in part as component of the SNX3-retromer complex which mediates the retrograde endosome-to-TGN transport of WLS distinct from the SNX-BAR retromer pathway. Promotes stability and cell surface expression of epithelial sodium channel (ENAC) subunits SCNN1A and SCNN1G. Not involved in EGFR degradation. Involved in the regulation of phagocytosis in dendritic cells possibly by regulating EEA1 recruitment to the nascent phagosomes. Involved in iron homeostasis through regulation of endocytic recycling of the transferrin receptor Tfrc presuambly by delivering the transferrin:transferrin receptor complex to recycling endosomes; the function may involve the CSC retromer subcomplex. Involved in regulation of neurite outgrowth in primary neurons. The sequence is that of Sorting nexin-3 (Snx3) from Mus musculus (Mouse).